Reading from the N-terminus, the 123-residue chain is Small ribosomal subunit protein uS11 (123 aa).

Belongs to the universal ribosomal protein uS11 family. In terms of assembly, part of the 30S ribosomal subunit. Interacts with proteins S7 and S18. Binds to IF-3.

Its function is as follows. Located on the platform of the 30S subunit, it bridges several disparate RNA helices of the 16S rRNA. Forms part of the Shine-Dalgarno cleft in the 70S ribosome. This Coxiella burnetii (strain RSA 331 / Henzerling II) protein is Small ribosomal subunit protein uS11.